An 810-amino-acid polypeptide reads, in one-letter code: Janus kinase and microtubule-interacting protein 2 (810 aa).

Coiled-coil stretches lie at residues 13–102 (EALI…EMSR), 148–178 (ERLK…QADK), and 207–244 (RRLM…KEAL). Positions 261-274 (PKREIPGRAGDGSE) are enriched in basic and acidic residues. 2 disordered regions span residues 261–280 (PKRE…SSPD) and 437–465 (YDED…DDDL). A coiled-coil region spans residues 280–419 (DLRRNQKRIA…REKLIRRRKH (140 aa)). Coiled-coil stretches lie at residues 468 to 597 (SLAA…RERR) and 664 to 808 (EKWI…SNRK).

The protein belongs to the JAKMIP family. In terms of tissue distribution, highly expressed in brain, moderately expressed in thymus, spleen and lung, and weakly expressed in kidney, liver and peripheral blood lymphocytes. Also expressed in adrenal and pituitary glands, as well as testis.

The protein localises to the golgi apparatus. This chain is Janus kinase and microtubule-interacting protein 2 (JAKMIP2), found in Homo sapiens (Human).